Here is a 90-residue protein sequence, read N- to C-terminus: Elongation factor 1-beta (90 aa).

Belongs to the EF-1-beta/EF-1-delta family.

In terms of biological role, promotes the exchange of GDP for GTP in EF-1-alpha/GDP, thus allowing the regeneration of EF-1-alpha/GTP that could then be used to form the ternary complex EF-1-alpha/GTP/AAtRNA. The chain is Elongation factor 1-beta from Staphylothermus marinus (strain ATCC 43588 / DSM 3639 / JCM 9404 / F1).